We begin with the raw amino-acid sequence, 759 residues long: 5-methyltetrahydropteroyltriglutamate--homocysteine methyltransferase (759 aa).

Residues 1 to 16 (MTQPVRRQPFTATITG) show a composition bias toward polar residues. Positions 1-22 (MTQPVRRQPFTATITGSPRIGP) are disordered. Residues 24–27 (RELK) and Lys118 contribute to the 5-methyltetrahydropteroyltri-L-glutamate site. Residues 437-439 (IGS) and Glu490 contribute to the L-homocysteine site. L-methionine is bound by residues 437–439 (IGS) and Glu490. Residues 521-522 (RC) and Trp567 each bind 5-methyltetrahydropteroyltri-L-glutamate. Asp605 contributes to the L-homocysteine binding site. Asp605 provides a ligand contact to L-methionine. Glu611 is a 5-methyltetrahydropteroyltri-L-glutamate binding site. Residues His647, Cys649, and Glu671 each coordinate Zn(2+). The Proton donor role is filled by His700. Cys732 contacts Zn(2+).

It belongs to the vitamin-B12 independent methionine synthase family. Zn(2+) is required as a cofactor.

The enzyme catalyses 5-methyltetrahydropteroyltri-L-glutamate + L-homocysteine = tetrahydropteroyltri-L-glutamate + L-methionine. It functions in the pathway amino-acid biosynthesis; L-methionine biosynthesis via de novo pathway; L-methionine from L-homocysteine (MetE route): step 1/1. Its function is as follows. Catalyzes the transfer of a methyl group from 5-methyltetrahydrofolate to homocysteine resulting in methionine formation. This chain is 5-methyltetrahydropteroyltriglutamate--homocysteine methyltransferase, found in Mycobacterium tuberculosis (strain ATCC 25177 / H37Ra).